The primary structure comprises 441 residues: MQENPGSIGVDGGYASNVPAFLTKLWTLVEDPETNHLICWSATGTSFHVFDQGRFAKEVLPKYFKHNNMASFVRQLNMYGFRKVVNIEQSGLVKPERDDTEFQHLYFLQGHEHLLEHIKRKVSIVKSEETKVRQEDLSKLLYEVQVLRSQQENMEMQMQDMKQQNDVLWREVVSLRQNHTQQQKVMNKLIQFLFSQMQSNSPSTVGMKRKLPLMLDDGCSTPPASKFSHNHSMESLQESFYIQSPSTESASCSTSSVMTGGPIISDVTEIPQSSSMALQMQAEESREKCLMLIKEEPVSPGVQGRAEGVPLGSCEVCAEPPVLPVAMVQSVLEGRGSNLGERRAKRPMLERPEIPDGVENVDMSLEDLQLLLRSHQQSMENNAAAMDQFTFSLPLNEWNFAEMDPNLKSELANALIPAAVSQYMFQGQEGELYPTAGYEEQ.

The DNA-binding element occupies 17–121; sequence NVPAFLTKLW…EHLLEHIKRK (105 aa). The hydrophobic repeat HR-A/B stretch occupies residues 130 to 205; the sequence is TKVRQEDLSK…QMQSNSPSTV (76 aa).

Belongs to the HSF family. In terms of tissue distribution, predominantly expressed in the eye.

Its subcellular location is the nucleus. Its function is as follows. Heat-shock transcription factor that specifically binds heat shock promoter elements (HSE). Required for denucleation and organelle rupture and degradation that occur during eye lens terminal differentiation, when fiber cells that compose the lens degrade all membrane-bound organelles in order to provide lens with transparency to allow the passage of light. In this process, may regulate denucleation of lens fiber cells in part by activating dnase1l1l and dnase2b transcription. May be involved in DNA repair through the transcriptional regulation of rad51. May up-regulate TP53 protein in lens fiber cells, possibly through protein stabilization. In the eye lens, controls the expression of alpha-crystallin B chain/CRYAB and consequently may be involved in the regulation of lysosomal acidification. This chain is Heat shock factor protein 4, found in Danio rerio (Zebrafish).